A 428-amino-acid chain; its full sequence is Light-independent protochlorophyllide reductase subunit N (428 aa).

[4Fe-4S] cluster contacts are provided by C29, C54, and C115.

It belongs to the BchN/ChlN family. As to quaternary structure, protochlorophyllide reductase is composed of three subunits; BchL, BchN and BchB. Forms a heterotetramer of two BchB and two BchN subunits. [4Fe-4S] cluster is required as a cofactor.

It carries out the reaction chlorophyllide a + oxidized 2[4Fe-4S]-[ferredoxin] + 2 ADP + 2 phosphate = protochlorophyllide a + reduced 2[4Fe-4S]-[ferredoxin] + 2 ATP + 2 H2O. Its pathway is porphyrin-containing compound metabolism; bacteriochlorophyll biosynthesis (light-independent). In terms of biological role, component of the dark-operative protochlorophyllide reductase (DPOR) that uses Mg-ATP and reduced ferredoxin to reduce ring D of protochlorophyllide (Pchlide) to form chlorophyllide a (Chlide). This reaction is light-independent. The NB-protein (BchN-BchB) is the catalytic component of the complex. The sequence is that of Light-independent protochlorophyllide reductase subunit N from Cereibacter sphaeroides (strain ATCC 17029 / ATH 2.4.9) (Rhodobacter sphaeroides).